Reading from the N-terminus, the 447-residue chain is Cysteine--tRNA ligase (447 aa).

Residue C28 participates in Zn(2+) binding. Residues 30–40 carry the 'HIGH' region motif; sequence PTVYNYIHVGN. Positions 211, 236, and 240 each coordinate Zn(2+). Residues 268 to 272 carry the 'KMSKS' region motif; sequence KMSKS. An ATP-binding site is contributed by K271.

Belongs to the class-I aminoacyl-tRNA synthetase family. In terms of assembly, monomer. The cofactor is Zn(2+).

The protein localises to the cytoplasm. It carries out the reaction tRNA(Cys) + L-cysteine + ATP = L-cysteinyl-tRNA(Cys) + AMP + diphosphate. The chain is Cysteine--tRNA ligase from Streptococcus pneumoniae (strain ATCC BAA-255 / R6).